We begin with the raw amino-acid sequence, 79 residues long: MSKVSGGSRRTRARRPMSNRRGRRSQSAAHRSRAQRRRRRTGTTRRARTSTARRARTRTARRSDLTRMMARDYGSDYRS.

Residues 1-79 (MSKVSGGSRR…ARDYGSDYRS (79 aa)) form a disordered region. Residues 9-60 (RRTRARRPMSNRRGRRSQSAAHRSRAQRRRRRTGTTRRARTSTARRARTRTA) show a composition bias toward basic residues. Repeats lie at residues 45-52 (RRARTSTA) and 53-60 (RRARTRTA). The span at 61 to 79 (RRSDLTRMMARDYGSDYRS) shows a compositional bias: basic and acidic residues.

It localises to the nucleus. The polypeptide is Sperm-specific basic nuclear protein SP4 (sp4-a) (Xenopus laevis (African clawed frog)).